Here is a 189-residue protein sequence, read N- to C-terminus: UPF0301 protein A1C_00165 (189 aa).

Belongs to the UPF0301 (AlgH) family.

The protein is UPF0301 protein A1C_00165 of Rickettsia akari (strain Hartford).